Here is a 133-residue protein sequence, read N- to C-terminus: Holo-[acyl-carrier-protein] synthase (133 aa).

Mg(2+) is bound by residues Asp8 and Glu57.

It belongs to the P-Pant transferase superfamily. AcpS family. The cofactor is Mg(2+).

The protein resides in the cytoplasm. The enzyme catalyses apo-[ACP] + CoA = holo-[ACP] + adenosine 3',5'-bisphosphate + H(+). In terms of biological role, transfers the 4'-phosphopantetheine moiety from coenzyme A to a Ser of acyl-carrier-protein. This is Holo-[acyl-carrier-protein] synthase from Bartonella quintana (strain Toulouse) (Rochalimaea quintana).